The primary structure comprises 356 residues: tRNA-specific 2-thiouridylase MnmA 2 (356 aa).

ATP contacts are provided by residues 8-15 (GMSGGVDS) and Met34. The Nucleophile role is filled by Cys103. Cys103 and Cys199 are joined by a disulfide. Residue Gly127 participates in ATP binding. Residues 149–151 (KDQ) form an interaction with tRNA region. Cys199 serves as the catalytic Cysteine persulfide intermediate. An interaction with tRNA region spans residues 305–306 (RY).

The protein belongs to the MnmA/TRMU family.

The protein localises to the cytoplasm. It catalyses the reaction S-sulfanyl-L-cysteinyl-[protein] + uridine(34) in tRNA + AH2 + ATP = 2-thiouridine(34) in tRNA + L-cysteinyl-[protein] + A + AMP + diphosphate + H(+). Its function is as follows. Catalyzes the 2-thiolation of uridine at the wobble position (U34) of tRNA, leading to the formation of s(2)U34. This Clostridium botulinum (strain Okra / Type B1) protein is tRNA-specific 2-thiouridylase MnmA 2.